A 163-amino-acid chain; its full sequence is EF-hand calcium-binding domain-containing protein 11 (163 aa).

EF-hand domains lie at 18 to 53 (SEHR…LFGY), 91 to 126 (RYRN…VAPK), and 127 to 162 (LPER…GQKE). Ca(2+) contacts are provided by D140, D142, D144, H146, and D151.

The sequence is that of EF-hand calcium-binding domain-containing protein 11 (EFCAB11) from Homo sapiens (Human).